We begin with the raw amino-acid sequence, 1113 residues long: Sterol regulatory element binding protein sbp-1 (1113 aa).

The tract at residues 1-52 (MNEEFEGDVPMSDPFLSLVTKLDDIAPFPNNDPLDFDMEHNWQEPGPSQQPD) is transcriptional activation (acidic). Disordered stretches follow at residues 24–68 (DIAP…EYYD), 101–132 (LGGGRGPSLAATQQLSGEGPASMLNPLQTSPP), 206–274 (SPYD…SPQN), and 290–345 (EVER…SQGT). Residues 229–238 (PHHHHHHPMP) show a composition bias toward basic residues. Acidic residues predominate over residues 324–337 (AEGDEDEDDEDSDS). Residues 355 to 368 (ERRTAHNLIEKKYR) are basic motif. The bHLH domain maps to 355–405 (ERRTAHNLIEKKYRCSINDRIQQLKVLLCGDEAKLSKSATLRRAIEHIEEV). Residues 369–405 (CSINDRIQQLKVLLCGDEAKLSKSATLRRAIEHIEEV) are helix-loop-helix motif. Residues 395 to 422 (LRRAIEHIEEVEHENQVLKHHVEQMRKT) are a coiled coil. The disordered stretch occupies residues 437–472 (TEYSARSPVESSPSPPRNERKRSRMSTTTPMKNGTR). The next 2 helical transmembrane spans lie at 478–498 (VTLFAMLLAVLIFNPIGLLAG) and 541–561 (MSYVWVFNILMIIYVVVKLLI).

Processed in the Golgi apparatus, releasing the protein from the membrane. In terms of processing, ubiquitinated; the nuclear form has a rapid turnover and is rapidly ubiquitinated and degraded by the proteasome in the nucleus. Broadly expressed, including many cells in the head. Expressed in the intestine.

The protein localises to the nucleus. It localises to the endoplasmic reticulum membrane. Its function is as follows. Transcription factor involved in maintaining normal fat levels. Regulates the expression of genes involved in lipid metabolism in response to nutrient availability, such as the fatty-acid desaturases fat-5, fat-6 and fat-7. In response to a high-glucose diet, promotes fatty acid synthesis, elongation and desaturation, acting in concert with transcription factor mxl-3. Plays a role in synthesis of monomethyl branched-chain fatty acids (mmBCFAs) as well as other very-long-chain fatty acids. Downstream of the cis-Golgi membrane protein eas-1/GOLT1B and the E3 ubiquitin ligase rnf-145/RNF145, plays a role in the regulation of glial size, perhaps by modulating synthesis of long-chain polyunsaturated fatty-acids (LC-PUFA). Modulates expression of genes in the one-carbon cycle, which produces the methyl donor S-adenosylmethionine (SAM). Probably involved in a feedback loop in which decreased levels of SAM lead to increased transcriptional activity of sbp-1, thereby causing lipid accumulation. Involved in the negative regulation of zinc homeostasis. Involved in the response to simulated microgravity, in concert with Mediator complex subunit mdt-15, probably acting in the intestine. Plays a role in transgenerational lipid accumulation in response to a high-fat diet, probably acting by upregulating wdr-5.1 expression to increase the level of trimethylated 'Lys-4' histone H3 (H3K4me3), which may then induce the expression of fat-5, fat-6 and fat-7. May act as an oxygen sensor for lipid metabolism. Functionally, precursor of the transcription factor form, which is embedded in the endoplasmic reticulum membrane. Processing of this form allows release of the transcription factor form that translocates into the nucleus and activates transcription of genes involved in sterol biosynthesis and lipid homeostasis. Key transcription factor that regulates expression of genes involved in sterol biosynthesis and lipid homeostasis. The protein is Sterol regulatory element binding protein sbp-1 of Caenorhabditis elegans.